The sequence spans 245 residues: Probable phosphatase YcdX (245 aa).

The Zn(2+) site is built by H7, H9, H15, H40, E73, H101, H131, D192, and H194.

It belongs to the PHP family. In terms of assembly, homotrimer. It depends on Zn(2+) as a cofactor.

In Escherichia coli O81 (strain ED1a), this protein is Probable phosphatase YcdX.